The chain runs to 441 residues: Mitochondrial distribution and morphology protein 12 (441 aa).

Positions 1-441 (MSIDIDWERA…VYPSFWTFLV (441 aa)) constitute an SMP-LTD domain. Disordered stretches follow at residues 70–89 (YEDG…PMRE) and 180–289 (TPLR…RMRE). Polar residues-rich tracts occupy residues 226 to 245 (SRPS…SVST) and 253 to 263 (SSQTVLANNPG).

Belongs to the MDM12 family. As to quaternary structure, component of the ER-mitochondria encounter structure (ERMES) or MDM complex, composed of MMM1, MDM10, MDM12 and MDM34. An MMM1 homodimer associates with one molecule of MDM12 on each side in a pairwise head-to-tail manner, and the SMP-LTD domains of MMM1 and MDM12 generate a continuous hydrophobic tunnel for phospholipid trafficking.

The protein localises to the mitochondrion outer membrane. It is found in the endoplasmic reticulum membrane. Its function is as follows. Component of the ERMES/MDM complex, which serves as a molecular tether to connect the endoplasmic reticulum (ER) and mitochondria. Components of this complex are involved in the control of mitochondrial shape and protein biogenesis, and function in nonvesicular lipid trafficking between the ER and mitochondria. MDM12 is required for the interaction of the ER-resident membrane protein MMM1 and the outer mitochondrial membrane-resident beta-barrel protein MDM10. The MDM12-MMM1 subcomplex functions in the major beta-barrel assembly pathway that is responsible for biogenesis of all mitochondrial outer membrane beta-barrel proteins, and acts in a late step after the SAM complex. The MDM10-MDM12-MMM1 subcomplex further acts in the TOM40-specific pathway after the action of the MDM12-MMM1 complex. Essential for establishing and maintaining the structure of mitochondria and maintenance of mtDNA nucleoids. In Paracoccidioides brasiliensis (strain Pb03), this protein is Mitochondrial distribution and morphology protein 12.